A 213-amino-acid chain; its full sequence is Orotate phosphoribosyltransferase (213 aa).

Residue Lys26 coordinates 5-phospho-alpha-D-ribose 1-diphosphate. 34-35 (FF) lines the orotate pocket. Residues 72-73 (YK), Arg99, Lys100, Lys103, His105, and 124-132 (DDVITAGTA) contribute to the 5-phospho-alpha-D-ribose 1-diphosphate site. Orotate-binding residues include Thr128 and Arg156.

The protein belongs to the purine/pyrimidine phosphoribosyltransferase family. PyrE subfamily. Homodimer. The cofactor is Mg(2+).

The catalysed reaction is orotidine 5'-phosphate + diphosphate = orotate + 5-phospho-alpha-D-ribose 1-diphosphate. It functions in the pathway pyrimidine metabolism; UMP biosynthesis via de novo pathway; UMP from orotate: step 1/2. In terms of biological role, catalyzes the transfer of a ribosyl phosphate group from 5-phosphoribose 1-diphosphate to orotate, leading to the formation of orotidine monophosphate (OMP). This chain is Orotate phosphoribosyltransferase, found in Saccharophagus degradans (strain 2-40 / ATCC 43961 / DSM 17024).